A 346-amino-acid polypeptide reads, in one-letter code: tRNA N6-adenosine threonylcarbamoyltransferase (346 aa).

A divalent metal cation-binding residues include H117, H121, and Y138. Residues Y138–G142, D170, G185, and N277 each bind substrate. D305 provides a ligand contact to a divalent metal cation.

This sequence belongs to the KAE1 / TsaD family. Component of the EKC/KEOPS complex composed of at least SPAP27G11.07c/BUD32, cgi121, gon7, pgp2 and SPAC4H3.13/PCC1; the whole complex dimerizes. A divalent metal cation is required as a cofactor.

It localises to the cytoplasm. It is found in the nucleus. The catalysed reaction is L-threonylcarbamoyladenylate + adenosine(37) in tRNA = N(6)-L-threonylcarbamoyladenosine(37) in tRNA + AMP + H(+). Component of the EKC/KEOPS complex that is required for the formation of a threonylcarbamoyl group on adenosine at position 37 (t(6)A37) in tRNAs that read codons beginning with adenine. The complex is probably involved in the transfer of the threonylcarbamoyl moiety of threonylcarbamoyl-AMP (TC-AMP) to the N6 group of A37. Pgp2 likely plays a direct catalytic role in this reaction, but requires other protein(s) of the complex to fulfill this activity. The EKC/KEOPS complex also promotes both telomere uncapping and telomere elongation. The complex is required for efficient recruitment of transcriptional coactivators. The chain is tRNA N6-adenosine threonylcarbamoyltransferase (pgp2) from Schizosaccharomyces pombe (strain 972 / ATCC 24843) (Fission yeast).